A 280-amino-acid chain; its full sequence is Bifunctional protein FolD (280 aa).

NADP(+)-binding positions include 159 to 161 (GRS), serine 184, and isoleucine 225.

The protein belongs to the tetrahydrofolate dehydrogenase/cyclohydrolase family. In terms of assembly, homodimer.

The enzyme catalyses (6R)-5,10-methylene-5,6,7,8-tetrahydrofolate + NADP(+) = (6R)-5,10-methenyltetrahydrofolate + NADPH. The catalysed reaction is (6R)-5,10-methenyltetrahydrofolate + H2O = (6R)-10-formyltetrahydrofolate + H(+). It participates in one-carbon metabolism; tetrahydrofolate interconversion. Functionally, catalyzes the oxidation of 5,10-methylenetetrahydrofolate to 5,10-methenyltetrahydrofolate and then the hydrolysis of 5,10-methenyltetrahydrofolate to 10-formyltetrahydrofolate. The polypeptide is Bifunctional protein FolD (Methanosphaerula palustris (strain ATCC BAA-1556 / DSM 19958 / E1-9c)).